Reading from the N-terminus, the 252-residue chain is Probable anguibactin biosynthesis thioesterase AngT (252 aa).

Catalysis depends on residues Ser-92 and His-229.

The protein belongs to the thioesterase family.

It functions in the pathway siderophore biosynthesis; anguibactin biosynthesis. Probable thioesterase. Involved in anguibactin production, but is not essential for virulence or iron transport gene expression. The polypeptide is Probable anguibactin biosynthesis thioesterase AngT (angT) (Vibrio anguillarum (strain ATCC 68554 / 775) (Listonella anguillarum)).